A 92-amino-acid chain; its full sequence is Small ribosomal subunit protein uS19 (92 aa).

This sequence belongs to the universal ribosomal protein uS19 family.

In terms of biological role, protein S19 forms a complex with S13 that binds strongly to the 16S ribosomal RNA. This is Small ribosomal subunit protein uS19 from Rhodospirillum rubrum (strain ATCC 11170 / ATH 1.1.1 / DSM 467 / LMG 4362 / NCIMB 8255 / S1).